Consider the following 79-residue polypeptide: TALLLAMHYTADTSLAFTSVAHTCRNVQFGWLIRNLHANGASMFFICIYLHIGRGFYYGSYLNKETWNIGVILLLTLMA.

3 consecutive transmembrane segments (helical) span residues 1–7 (TALLLAM), 31–52 (WLIR…YLHI), and 67–79 (WNIG…TLMA). Residues His37 and His51 each coordinate heme b.

Belongs to the cytochrome b family. The cytochrome bc1 complex contains 11 subunits: 3 respiratory subunits (MT-CYB, CYC1 and UQCRFS1), 2 core proteins (UQCRC1 and UQCRC2) and 6 low-molecular weight proteins (UQCRH/QCR6, UQCRB/QCR7, UQCRQ/QCR8, UQCR10/QCR9, UQCR11/QCR10 and a cleavage product of UQCRFS1). This cytochrome bc1 complex then forms a dimer. Heme b is required as a cofactor.

The protein localises to the mitochondrion inner membrane. Its function is as follows. Component of the ubiquinol-cytochrome c reductase complex (complex III or cytochrome b-c1 complex) that is part of the mitochondrial respiratory chain. The b-c1 complex mediates electron transfer from ubiquinol to cytochrome c. Contributes to the generation of a proton gradient across the mitochondrial membrane that is then used for ATP synthesis. This is Cytochrome b (MT-CYB) from Corcorax melanoramphos (White-winged chough).